Reading from the N-terminus, the 216-residue chain is MDTQTLNFNKVHFVTSAPDIRHLPNDGGVEIAFAGRSNAGKSSALNTLTKHKNLARTSKTPGRTQLINLFELEPGKRLVDLPGYGYAQVPLEMKLKWQKSLAEYLQRRESLKGLVILMDIRHPLKDTDMNMLEWSSHRKLPVMLLLTKADKLSPGPRNNQVIKVRQAVAELGPQIQVEAFSSLTQIGVEKLAQTLTGWYLAGADDMTDGEQAPLEE.

The EngB-type G domain maps to 27–201; sequence GGVEIAFAGR…AQTLTGWYLA (175 aa). GTP contacts are provided by residues 35–42, 62–66, 80–83, 147–150, and 180–182; these read GRSNAGKS, GRTQL, DLPG, TKAD, and FSS. The Mg(2+) site is built by serine 42 and threonine 64.

It belongs to the TRAFAC class TrmE-Era-EngA-EngB-Septin-like GTPase superfamily. EngB GTPase family. It depends on Mg(2+) as a cofactor.

Necessary for normal cell division and for the maintenance of normal septation. The sequence is that of Probable GTP-binding protein EngB from Aeromonas hydrophila subsp. hydrophila (strain ATCC 7966 / DSM 30187 / BCRC 13018 / CCUG 14551 / JCM 1027 / KCTC 2358 / NCIMB 9240 / NCTC 8049).